The chain runs to 612 residues: PAN2-PAN3 deadenylation complex subunit PAN3 (612 aa).

The C3H1-type zinc-finger motif lies at 10 to 39 (WAKDTPCKNITIYGYCKYENDGCIFNHGKP). Residues 44–62 (SNTGGAAAGSAEDSAASGG) are compositionally biased toward low complexity. Residues 44–64 (SNTGGAAAGSAEDSAASGGVT) form a disordered region. Short sequence motifs (PABPC-interacting motif-2 (PAM-2)) lie at residues 84 to 104 (SVAI…IVSS) and 111 to 131 (TAFT…SANV). The pseudokinase domain stretch occupies residues 231-481 (QVFPSDGNLP…TIAEFTALFS (251 aa)). ATP contacts are provided by residues arginine 286, 336-343 (DYYPQSNS), and 389-390 (DK). The stretch at 482–520 (HKMLDIISSSQTYSEYIEQHLSRELENGRLFRLMCKLNF) forms a coiled coil. The interval 521–612 (IFGRMESSMD…IDSTFRSMTQ (92 aa)) is knob domain.

Belongs to the protein kinase superfamily. PAN3 family. Homodimer. Forms a heterotrimer with a catalytic subunit PAN2 to form the poly(A)-nuclease (PAN) deadenylation complex. Interacts (via PAM-2 motif) with poly(A)-binding protein PAB1 (via PABC domain), conferring substrate specificity of the enzyme complex.

The protein localises to the cytoplasm. In terms of biological role, regulatory subunit of the poly(A)-nuclease (PAN) deadenylation complex, one of two cytoplasmic mRNA deadenylases involved in mRNA turnover. PAN specifically shortens poly(A) tails of RNA and the activity is stimulated by poly(A)-binding protein PAB1. PAN deadenylation is followed by rapid degradation of the shortened mRNA tails by the CCR4-NOT complex. Deadenylated mRNAs are then degraded by two alternative mechanisms, namely exosome-mediated 3'-5' exonucleolytic degradation, or deadenylation-dependent mRNA decaping and subsequent 5'-3' exonucleolytic degradation by XRN1. May also be involved in post-transcriptional maturation of mRNA poly(A) tails. PAN3 acts as a positive regulator for PAN activity, recruiting the catalytic subunit PAN2 to mRNA via its interaction with RNA and with PAB1. The polypeptide is PAN2-PAN3 deadenylation complex subunit PAN3 (Eremothecium gossypii (strain ATCC 10895 / CBS 109.51 / FGSC 9923 / NRRL Y-1056) (Yeast)).